Consider the following 156-residue polypeptide: Snaclec A5 (156 aa).

Residues 1–23 (MGRSISVSFGLLVVFLSLSGTGA) form the signal peptide. Disulfide bonds link Cys-27–Cys-38, Cys-55–Cys-154, and Cys-129–Cys-146. In terms of domain architecture, C-type lectin spans 34-155 (HEGHCYKVFN…CGKPYRFTCE (122 aa)).

This sequence belongs to the snaclec family. In terms of assembly, heterodimer; disulfide-linked. Expressed by the venom gland.

Its subcellular location is the secreted. In terms of biological role, interferes with one step of hemostasis (modulation of platelet aggregation, or coagulation cascade, for example). In Macrovipera lebetinus (Levantine viper), this protein is Snaclec A5.